A 477-amino-acid chain; its full sequence is uncharacterized protein (477 aa).

Transmembrane regions (helical) follow at residues 31-51 (LLRLSLFQVSVGMAQVLLLGT), 60-80 (LGVPALVVAAMISIPVLVAPF), 103-123 (LWFGSLWQMGGLALMPFSLIL), 130-150 (MGPAWAGEAFAGVAFLMAGVG), 177-197 (LLYVMFLIGMGISAVIVGWLL), 205-225 (LIRVVQGCGAMTLVLNVIALW), 248-268 (AWGLLAAETGALRLLATVMVG), 291-311 (VGQTTWLTAGWAFGALVGFIW), 334-354 (IVAFTAVLFSPLFGSKVLFFA), 359-379 (IGLGSGMFGIATLTVAMMVVV), 384-404 (GIALGAWGAAQATAAGLAVFI), and 433-453 (VVYVTEIGLLFITLAVLGPLV).

This sequence belongs to the PucC family.

It is found in the cell membrane. This is an uncharacterized protein from Rhodobacter capsulatus (Rhodopseudomonas capsulata).